A 294-amino-acid chain; its full sequence is Small ribosomal subunit protein uS2 (294 aa).

The protein belongs to the universal ribosomal protein uS2 family.

The polypeptide is Small ribosomal subunit protein uS2 (rpsB) (Mycoplasma pneumoniae (strain ATCC 29342 / M129 / Subtype 1) (Mycoplasmoides pneumoniae)).